A 746-amino-acid polypeptide reads, in one-letter code: Exostosin-1 (746 aa).

The Cytoplasmic portion of the chain corresponds to 1 to 7 (MQAKKRY). Residues 8–28 (FILLSAGSCLALLFYFGGLQF) traverse the membrane as a helical; Signal-anchor for type II membrane protein segment. Residues 29-746 (RASRSHSRRE…RKKYRDIERL (718 aa)) are Lumenal-facing. Asn89 is a glycosylation site (N-linked (GlcNAc...) asparagine). 2 disulfides stabilise this stretch: Cys98-Cys103 and Cys109-Cys152. A protein-binding residues include Leu166 and Tyr203. The UDP site is built by Lys267, Lys269, Tyr271, and Arg280. Cys298 and Cys312 form a disulfide bridge. His300 is a binding site for a protein. UDP contacts are provided by Tyr319 and Tyr324. The N-linked (GlcNAc...) asparagine glycan is linked to Asn330. 2 disulfide bridges follow: Cys334–Cys355 and Cys652–Cys704. UDP is bound by residues Arg346 and Glu349.

It belongs to the glycosyltransferase 47 family. In terms of assembly, part of the heparan sulfate polymerase, a dimeric complex composed of EXT1 and EXT2. Could also form homooligomeric complexes. Interacts with NDST1. Post-translationally, N-glycosylated.

The protein resides in the golgi apparatus membrane. The protein localises to the golgi apparatus. It localises to the cis-Golgi network membrane. Its subcellular location is the endoplasmic reticulum membrane. It catalyses the reaction 3-O-{alpha-D-GlcNAc-[(1-&gt;4)-beta-D-GlcA-(1-&gt;4)-alpha-D-GlcNAc](n)-(1-&gt;4)-beta-D-GlcA-(1-&gt;3)-beta-D-Gal-(1-&gt;3)-beta-D-Gal-(1-&gt;4)-beta-D-Xyl}-L-seryl-[protein] + UDP-alpha-D-glucuronate = 3-O-{[(1-&gt;4)-beta-D-GlcA-(1-&gt;4)-alpha-D-GlcNAc](n+1)-(1-&gt;4)-beta-D-GlcA-(1-&gt;3)-beta-D-Gal-(1-&gt;3)-beta-D-Gal-(1-&gt;4)-beta-D-Xyl}-L-seryl-[protein] + UDP + H(+). It functions in the pathway protein modification; protein glycosylation. In terms of biological role, glycosyltransferase forming with EXT2 the heterodimeric heparan sulfate polymerase which catalyzes the elongation of the heparan sulfate glycan backbone. Glycan backbone extension consists in the alternating transfer of (1-&gt;4)-beta-D-GlcA and (1-&gt;4)-alpha-D-GlcNAc residues from their respective UDP-sugar donors. Both EXT1 and EXT2 are required for the full activity of the polymerase since EXT1 bears the N-acetylglucosaminyl-proteoglycan 4-beta-glucuronosyltransferase activity within the complex while EXT2 carries the glucuronosyl-N-acetylglucosaminyl-proteoglycan 4-alpha-N-acetylglucosaminyltransferase activity. Heparan sulfate proteoglycans are ubiquitous components of the extracellular matrix and play an important role in tissue homeostasis and signaling. The sequence is that of Exostosin-1 (EXT1) from Papio anubis (Olive baboon).